The following is a 142-amino-acid chain: Large ribosomal subunit protein uL11 (142 aa).

Belongs to the universal ribosomal protein uL11 family. Part of the ribosomal stalk of the 50S ribosomal subunit. Interacts with L10 and the large rRNA to form the base of the stalk. L10 forms an elongated spine to which L12 dimers bind in a sequential fashion forming a multimeric L10(L12)X complex. Post-translationally, one or more lysine residues are methylated.

In terms of biological role, forms part of the ribosomal stalk which helps the ribosome interact with GTP-bound translation factors. This Dictyoglomus turgidum (strain DSM 6724 / Z-1310) protein is Large ribosomal subunit protein uL11.